Reading from the N-terminus, the 231-residue chain is Orotidine 5'-phosphate decarboxylase (231 aa).

Substrate is bound by residues D11, K34, 61–70 (DLKLHDIPNT), T117, R179, Q188, G208, and R209. K63 acts as the Proton donor in catalysis.

The protein belongs to the OMP decarboxylase family. Type 1 subfamily. Homodimer.

It catalyses the reaction orotidine 5'-phosphate + H(+) = UMP + CO2. The protein operates within pyrimidine metabolism; UMP biosynthesis via de novo pathway; UMP from orotate: step 2/2. Catalyzes the decarboxylation of orotidine 5'-monophosphate (OMP) to uridine 5'-monophosphate (UMP). This Streptococcus thermophilus (strain CNRZ 1066) protein is Orotidine 5'-phosphate decarboxylase.